Here is a 217-residue protein sequence, read N- to C-terminus: Small ribosomal subunit protein uS3c (217 aa).

Residues 43-117 (IKNYVQKNKR…KLNIAITRIA (75 aa)) enclose the KH type-2 domain.

The protein belongs to the universal ribosomal protein uS3 family. As to quaternary structure, part of the 30S ribosomal subunit.

Its subcellular location is the plastid. The protein localises to the chloroplast. The polypeptide is Small ribosomal subunit protein uS3c (rps3) (Platanus occidentalis (Sycamore)).